A 306-amino-acid polypeptide reads, in one-letter code: Ribonuclease Z (306 aa).

H63, H65, D67, H68, H141, D211, and H269 together coordinate Zn(2+). Catalysis depends on D67, which acts as the Proton acceptor.

It belongs to the RNase Z family. Homodimer. Requires Zn(2+) as cofactor.

It catalyses the reaction Endonucleolytic cleavage of RNA, removing extra 3' nucleotides from tRNA precursor, generating 3' termini of tRNAs. A 3'-hydroxy group is left at the tRNA terminus and a 5'-phosphoryl group is left at the trailer molecule.. Zinc phosphodiesterase, which displays some tRNA 3'-processing endonuclease activity. Probably involved in tRNA maturation, by removing a 3'-trailer from precursor tRNA. This chain is Ribonuclease Z, found in Staphylococcus aureus (strain bovine RF122 / ET3-1).